Reading from the N-terminus, the 403-residue chain is Tyrosine--tRNA ligase (403 aa).

The 'HIGH' region motif lies at 42–51 (PTAPDLHLGH). A 'KMSKS' region motif is present at residues 226 to 230 (KMSKS). Lysine 229 provides a ligand contact to ATP. The S4 RNA-binding domain occupies 339-400 (LRLAGLLTAA…GKRNFARVLL (62 aa)).

Belongs to the class-I aminoacyl-tRNA synthetase family. TyrS type 2 subfamily. Homodimer.

The protein resides in the cytoplasm. It carries out the reaction tRNA(Tyr) + L-tyrosine + ATP = L-tyrosyl-tRNA(Tyr) + AMP + diphosphate + H(+). Catalyzes the attachment of tyrosine to tRNA(Tyr) in a two-step reaction: tyrosine is first activated by ATP to form Tyr-AMP and then transferred to the acceptor end of tRNA(Tyr). This Xanthomonas euvesicatoria pv. vesicatoria (strain 85-10) (Xanthomonas campestris pv. vesicatoria) protein is Tyrosine--tRNA ligase.